Here is a 454-residue protein sequence, read N- to C-terminus: Pup--protein ligase (454 aa).

E9 provides a ligand contact to Mg(2+). R53 provides a ligand contact to ATP. Y55 contributes to the Mg(2+) binding site. D57 functions as the Proton acceptor in the catalytic mechanism. E63 is a Mg(2+) binding site. ATP contacts are provided by T66 and W420.

The protein belongs to the Pup ligase/Pup deamidase family. Pup-conjugating enzyme subfamily.

It carries out the reaction ATP + [prokaryotic ubiquitin-like protein]-L-glutamate + [protein]-L-lysine = ADP + phosphate + N(6)-([prokaryotic ubiquitin-like protein]-gamma-L-glutamyl)-[protein]-L-lysine.. It functions in the pathway protein degradation; proteasomal Pup-dependent pathway. Its pathway is protein modification; protein pupylation. In terms of biological role, catalyzes the covalent attachment of the prokaryotic ubiquitin-like protein modifier Pup to the proteasomal substrate proteins, thereby targeting them for proteasomal degradation. This tagging system is termed pupylation. The ligation reaction involves the side-chain carboxylate of the C-terminal glutamate of Pup and the side-chain amino group of a substrate lysine. This is Pup--protein ligase from Paenarthrobacter aurescens (strain TC1).